A 354-amino-acid chain; its full sequence is Protein RecA (354 aa).

67-74 (GPESSGKT) serves as a coordination point for ATP. Residues 331–354 (GGANSSDSKTESDENIDLETGEVF) form a disordered region. Over residues 343-354 (DENIDLETGEVF) the composition is skewed to acidic residues.

This sequence belongs to the RecA family.

It localises to the cytoplasm. Its function is as follows. Can catalyze the hydrolysis of ATP in the presence of single-stranded DNA, the ATP-dependent uptake of single-stranded DNA by duplex DNA, and the ATP-dependent hybridization of homologous single-stranded DNAs. It interacts with LexA causing its activation and leading to its autocatalytic cleavage. The protein is Protein RecA of Shewanella frigidimarina (strain NCIMB 400).